Reading from the N-terminus, the 249-residue chain is MDDGELEFSNSNMGGELPSCSMDSFFDELLRDSHACTHTHTCNPPGPENTHTHTCLHVHTKILPDKVSTDDTSESSGKKRPLGNREAVRKYREKKKAKAASLEDEVMRLKAVNNQLLKRLQGQAALEAEVTRLKCLLVDIRGRIDGEIGAFPYQKPAVTNVPYSYMMHPCNMQCDVDNLYCLQNGNNGEGASMNEQGLNGCEFDQLECLANQNLAGKEIPVCSNGIGTFTVNGSGVNKRKGEPRAAKAV.

A disordered region spans residues 66–90; it reads KVSTDDTSESSGKKRPLGNREAVRK. A bZIP domain is found at 74 to 121; it reads ESSGKKRPLGNREAVRKYREKKKAKAASLEDEVMRLKAVNNQLLKRLQ. Residues 78 to 98 are basic motif; sequence KKRPLGNREAVRKYREKKKAK. The interval 102-116 is leucine-zipper; sequence LEDEVMRLKAVNNQL.

The protein localises to the nucleus. Functionally, transcription factor involved in the response to zinc ion deficiency. Binds to the consensus sequence 5'-[AG]TGTCGACA[CT]-3' also called zinc deficiency response element (ZDRE). The ZDRE sequence is conserved in the plant kingdom and present in the promoters of genes that constitute the primary response to zinc deficiency, comprising additional ZIP metal transporter genes. Required for zinc accumulation in roots. Mediates the expression of the zinc transporter ZIP12 during growth in zinc-deficient conditions. ZIP12 transporter is involved in zinc uptake in roots. This chain is Basic leucine zipper 23, found in Arabidopsis thaliana (Mouse-ear cress).